We begin with the raw amino-acid sequence, 786 residues long: Endonuclease MutS2 (786 aa).

332–339 (GPNTGGKT) serves as a coordination point for ATP. Positions 711 to 786 (VDLRGMDSIE…GTGVTIVELK (76 aa)) constitute a Smr domain.

Belongs to the DNA mismatch repair MutS family. MutS2 subfamily. As to quaternary structure, homodimer. Binds to stalled ribosomes, contacting rRNA.

Endonuclease that is involved in the suppression of homologous recombination and thus may have a key role in the control of bacterial genetic diversity. Its function is as follows. Acts as a ribosome collision sensor, splitting the ribosome into its 2 subunits. Detects stalled/collided 70S ribosomes which it binds and splits by an ATP-hydrolysis driven conformational change. Acts upstream of the ribosome quality control system (RQC), a ribosome-associated complex that mediates the extraction of incompletely synthesized nascent chains from stalled ribosomes and their subsequent degradation. Probably generates substrates for RQC. This chain is Endonuclease MutS2, found in Clostridium kluyveri (strain NBRC 12016).